Consider the following 435-residue polypeptide: Transcriptional enhancer factor TEF-5 (435 aa).

Positions methionine 1–proline 12 are enriched in polar residues. A disordered region spans residues methionine 1–valine 34. Alanine 2 carries the N-acetylalanine modification. Over residues glutamate 14 to aspartate 28 the composition is skewed to basic and acidic residues. Positions aspartate 28–glutamate 104 form a DNA-binding region, TEA. Serine 148 bears the Phosphoserine mark. Residues glycine 173–aspartate 435 form a transcriptional activation region.

As to quaternary structure, interacts with YAP1 and WWTR1/TAZ. As to expression, preferentially expressed in the placenta.

The protein localises to the nucleus. In terms of biological role, transcription factor which plays a key role in the Hippo signaling pathway, a pathway involved in organ size control and tumor suppression by restricting proliferation and promoting apoptosis. The core of this pathway is composed of a kinase cascade wherein MST1/MST2, in complex with its regulatory protein SAV1, phosphorylates and activates LATS1/2 in complex with its regulatory protein MOB1, which in turn phosphorylates and inactivates YAP1 oncoprotein and WWTR1/TAZ. Acts by mediating gene expression of YAP1 and WWTR1/TAZ, thereby regulating cell proliferation, migration and epithelial mesenchymal transition (EMT) induction. Binds to multiple functional elements of the human chorionic somatomammotropin-B gene enhancer. This chain is Transcriptional enhancer factor TEF-5 (TEAD3), found in Homo sapiens (Human).